The primary structure comprises 367 residues: Cytochrome b (367 aa).

Transmembrane regions (helical) follow at residues 33 to 53 (FGSL…FLAM), 77 to 98 (WVLR…YLHI), 113 to 133 (WNMG…GYVL), and 178 to 198 (FFAF…VHLL). Residues H83 and H97 each coordinate heme b. The heme b site is built by H182 and H196. Residue H201 coordinates a ubiquinone. Transmembrane regions (helical) follow at residues 226-246 (IKDI…VLFS), 288-308 (LGGV…PFLH), 320-340 (FSQC…WIGG), and 347-367 (YIII…VIMP).

It belongs to the cytochrome b family. As to quaternary structure, the cytochrome bc1 complex contains 11 subunits: 3 respiratory subunits (MT-CYB, CYC1 and UQCRFS1), 2 core proteins (UQCRC1 and UQCRC2) and 6 low-molecular weight proteins (UQCRH/QCR6, UQCRB/QCR7, UQCRQ/QCR8, UQCR10/QCR9, UQCR11/QCR10 and a cleavage product of UQCRFS1). This cytochrome bc1 complex then forms a dimer. The cofactor is heme b.

The protein resides in the mitochondrion inner membrane. In terms of biological role, component of the ubiquinol-cytochrome c reductase complex (complex III or cytochrome b-c1 complex) that is part of the mitochondrial respiratory chain. The b-c1 complex mediates electron transfer from ubiquinol to cytochrome c. Contributes to the generation of a proton gradient across the mitochondrial membrane that is then used for ATP synthesis. This Hypsugo savii (Savi's pipistrelle) protein is Cytochrome b (MT-CYB).